Reading from the N-terminus, the 605-residue chain is Ankyrin repeat domain-containing protein 13D (605 aa).

UIM domains are found at residues 482-501 (EDDD…AGTE) and 528-547 (EEQL…STES). Positions 538 to 554 (QESLQLSTESRGPESPQ) are enriched in low complexity. Residues 538–605 (QESLQLSTES…RILQLSLTEH (68 aa)) are disordered. Serine 552 bears the Phosphoserine mark. At threonine 556 the chain carries Phosphothreonine. Positions 564 to 575 (SFEEQLRLALEL) are enriched in low complexity. 2 consecutive UIM domains span residues 564–583 (SFEE…QEEL) and 589–605 (QEED…LTEH). The segment covering 576 to 589 (SSREQEELERRGQQ) has biased composition (basic and acidic residues).

Interacts with EGFR (ubiquitinated); the interaction is direct and may regulate EGFR internalization.

The protein resides in the cell membrane. The protein localises to the late endosome. Ubiquitin-binding protein that specifically recognizes and binds 'Lys-63'-linked ubiquitin. Does not bind 'Lys-48'-linked ubiquitin. Positively regulates the internalization of ligand-activated EGFR by binding to the Ub moiety of ubiquitinated EGFR at the cell membrane. This chain is Ankyrin repeat domain-containing protein 13D (Ankrd13d), found in Mus musculus (Mouse).